Consider the following 145-residue polypeptide: Large ribosomal subunit protein uL15 (145 aa).

The interval 1–57 (MKLNDLSPAPGSRREKHRPGRGIGSGLGKTGGRGHKGQTSRSGGTIAPGFEGGQQPL) is disordered. Positions 21–31 (RGIGSGLGKTG) are enriched in gly residues.

Belongs to the universal ribosomal protein uL15 family. In terms of assembly, part of the 50S ribosomal subunit.

In terms of biological role, binds to the 23S rRNA. The chain is Large ribosomal subunit protein uL15 from Pseudomonas fluorescens (strain SBW25).